The primary structure comprises 525 residues: C6 finger transcription factor fsqA (525 aa).

Residues 12–53 (CDRCRGQKLRCVGAGKPIPNSSSRLLRNEIPCDRCRRAKVEC) constitute a DNA-binding region (zn(2)-C6 fungal-type). Disordered stretches follow at residues 80–142 (RSSS…LGDM), 204–260 (EWNS…EPAG), and 327–371 (RARS…ARSS). Residues 95 to 115 (PPNSLVTAASKPHPNSLSFNH) are compositionally biased toward polar residues. Residues 327–337 (RARSQWSSLPE) are compositionally biased toward polar residues.

It localises to the nucleus. Its function is as follows. Transcription factor that regulates the expression of the gene cluster that mediates the biosynthesis of the isoquinoline alkaloids fumisoquin A, fumisoquin B and fumisoquin C; as well as small amounts of fumipyrrole as a shunt metabolite. The products of the cluster lead to a brown coloration and are important for growth and conidiation. The chain is C6 finger transcription factor fsqA from Aspergillus fumigatus (strain ATCC MYA-4609 / CBS 101355 / FGSC A1100 / Af293) (Neosartorya fumigata).